Reading from the N-terminus, the 705-residue chain is Ribonuclease R (705 aa).

Positions 240-567 (RRDLREQLCF…VHRLLKKALR (328 aa)) constitute an RNB domain. The region spanning 615 to 696 (GEEFIGIITG…ERARVEFELI (82 aa)) is the S1 motif domain.

Belongs to the RNR ribonuclease family. RNase R subfamily.

It is found in the cytoplasm. The catalysed reaction is Exonucleolytic cleavage in the 3'- to 5'-direction to yield nucleoside 5'-phosphates.. Its function is as follows. 3'-5' exoribonuclease that releases 5'-nucleoside monophosphates and is involved in maturation of structured RNAs. The polypeptide is Ribonuclease R (Aquifex aeolicus (strain VF5)).